Here is a 404-residue protein sequence, read N- to C-terminus: Keratin, type I cuticular Ha3-I (404 aa).

The head stretch occupies residues 1–56; it reads MSYSCGLPNLSCRTSCSSRPCVPPSCHGCTLPGACNIPANVSNCNWFCEGSFNGSE. The region spanning 56 to 367 is the IF rod domain; that stretch reads EKETMQFLND…SLLESEDCKL (312 aa). The coil 1A stretch occupies residues 57–91; sequence KETMQFLNDRLASYLEKVRQLERDNAELENLIRER. The interval 92–102 is linker 1; it reads SQQQEPLVCAS. The tract at residues 103–203 is coil 1B; the sequence is YQSYFKTIEE…HEQEVNTLRC (101 aa). The segment at 204–219 is linker 12; it reads QLGGRLNVEVDAAPAV. The tract at residues 220-363 is coil 2; it reads DLNQVLNETR…NTYRSLLESE (144 aa). The tail stretch occupies residues 364 to 404; sequence DCKLPSNPCAITNACDKSTGPCISNPCGPRARCGPCNTFGY.

The protein belongs to the intermediate filament family.

The sequence is that of Keratin, type I cuticular Ha3-I from Pan troglodytes (Chimpanzee).